The chain runs to 163 residues: Transcriptional repressor NrdR (163 aa).

Residues 3 to 34 fold into a zinc finger; that stretch reads CPFCRHDDSRVVDSRTTDDGSSIRRRRQCPNC. Residues 46 to 136 form the ATP-cone domain; it reads LSVIKRSGAP…VYQAFDSLAD (91 aa).

It belongs to the NrdR family. Zn(2+) serves as cofactor.

Negatively regulates transcription of bacterial ribonucleotide reductase nrd genes and operons by binding to NrdR-boxes. The protein is Transcriptional repressor NrdR of Kineococcus radiotolerans (strain ATCC BAA-149 / DSM 14245 / SRS30216).